Consider the following 209-residue polypeptide: MIFPIFFTFFLLLSTSHASVQDFCVADYKAPDGPAGYSCKKPAIVTVNDFVYSGLGIAGNTTNIFKAAVTPAFAAQFPGVNGLGISLARLDLGPGGVVPFHTHPGASEVLLVVQGTIIAGFVASDNTPYLKTLKKGDIIVFPQGLLHFQVNGGDTPAIAFPSFSSPSPGLQIVDFALFKNDLATELIAQTTLLDAPQIKKLKGVLGGTN.

The first 18 residues, 1 to 18, serve as a signal peptide directing secretion; the sequence is MIFPIFFTFFLLLSTSHA. The cysteines at positions 24 and 39 are disulfide-linked. A Cupin type-1 domain is found at 53–199; it reads SGLGIAGNTT…TTLLDAPQIK (147 aa). Asn-60 carries N-linked (GlcNAc...) asparagine glycosylation. Residues His-101, His-103, Glu-108, and His-147 each contribute to the Mn(2+) site.

The protein belongs to the germin family. In terms of assembly, interacts with ABP20.

Its subcellular location is the secreted. The protein localises to the extracellular space. It is found in the apoplast. It localises to the cell wall. Its function is as follows. Probable receptor for the plant growth-promoting hormone auxin. This Prunus persica (Peach) protein is Auxin-binding protein ABP19b (ABP19B).